A 663-amino-acid chain; its full sequence is Subtilisin-like serine protease (663 aa).

A signal peptide spans 1-23 (MKKFGAVVLALFLVGLMAGSVLA). Residues 24–136 (APQKPAVRNV…IQEDYVVKVA (113 aa)) constitute a propeptide, removed in mature form. The Peptidase S8 domain maps to 139–439 (TEGLDESAAQ…AGRVNAYKAA (301 aa)). Active-site charge relay system residues include Asp170, His203, and Ser382. Pro420, Ile423, Asp483, Leu484, Asp485, Asp497, Tyr498, Thr501, and Glu507 together coordinate Ca(2+). Positions 537 to 565 (VSDGSLGQPSGGGSEPSPSPSPEPTVDEK) are disordered. Positions 563-663 (DEKTFTGTVH…YQLDAKVYYG (101 aa)) are cleaved as a propeptide — removed in mature form.

The protein belongs to the peptidase S8 family. In terms of assembly, monomer.

The catalysed reaction is Hydrolysis of proteins with broad specificity for peptide bonds, and a preference for a large uncharged residue in P1. Hydrolyzes peptide amides.. With respect to regulation, resistant to treatment with 5% SDS, 8 M urea, 10% Triton X-100 or 10% Tween-20. Fully active although less stable in the presence of 10 mM EDTA. Activity not affected by the absence or presence of 10 mM CaCl(2). Unstable in the presence of 2 M or over GdnHCl and loses 35% and 99% of its activity upon incubation with 2 and 4 M GdnHCl, respectively, for 1 hour at 55 degrees Celsius. Nearly fully loses activity upon incubation at pH 2.0. In terms of biological role, serine protease with a broad substrate specificity. The protein is Subtilisin-like serine protease of Thermococcus kodakarensis (strain ATCC BAA-918 / JCM 12380 / KOD1) (Pyrococcus kodakaraensis (strain KOD1)).